We begin with the raw amino-acid sequence, 143 residues long: Small ribosomal subunit protein uS11c (143 aa).

This sequence belongs to the universal ribosomal protein uS11 family. In terms of assembly, part of the 30S ribosomal subunit.

It is found in the plastid. It localises to the chloroplast. In Cenchrus americanus (Pearl millet), this protein is Small ribosomal subunit protein uS11c.